The primary structure comprises 131 residues: Large ribosomal subunit protein bL17 (131 aa).

The protein belongs to the bacterial ribosomal protein bL17 family. As to quaternary structure, part of the 50S ribosomal subunit. Contacts protein L32.

This is Large ribosomal subunit protein bL17 from Shewanella violacea (strain JCM 10179 / CIP 106290 / LMG 19151 / DSS12).